A 405-amino-acid polypeptide reads, in one-letter code: Argininosuccinate synthase (405 aa).

ATP-binding positions include 10–18 (AYSGGLDTS) and Ala-37. Positions 88 and 93 each coordinate L-citrulline. Gly-118 provides a ligand contact to ATP. The L-aspartate site is built by Thr-120, Asn-124, and Asp-125. Asn-124 lines the L-citrulline pocket. 5 residues coordinate L-citrulline: Arg-128, Ser-179, Ser-188, Glu-264, and Tyr-276.

The protein belongs to the argininosuccinate synthase family. Type 1 subfamily. Homotetramer.

It localises to the cytoplasm. The enzyme catalyses L-citrulline + L-aspartate + ATP = 2-(N(omega)-L-arginino)succinate + AMP + diphosphate + H(+). Its pathway is amino-acid biosynthesis; L-arginine biosynthesis; L-arginine from L-ornithine and carbamoyl phosphate: step 2/3. The polypeptide is Argininosuccinate synthase (Pseudomonas savastanoi pv. phaseolicola (strain 1448A / Race 6) (Pseudomonas syringae pv. phaseolicola (strain 1448A / Race 6))).